The chain runs to 611 residues: UPF0508 protein SCY_3114 (611 aa).

Belongs to the UPF0508 family.

This chain is UPF0508 protein SCY_3114, found in Saccharomyces cerevisiae (strain YJM789) (Baker's yeast).